The sequence spans 344 residues: 3-dehydroquinate synthase (344 aa).

NAD(+) is bound by residues 60 to 65 (DGEEYK), 94 to 98 (GVISD), 118 to 119 (TT), K131, K140, and 158 to 161 (FLNT). Positions 173, 232, and 249 each coordinate Zn(2+).

This sequence belongs to the sugar phosphate cyclases superfamily. Dehydroquinate synthase family. Requires Co(2+) as cofactor. Zn(2+) is required as a cofactor. NAD(+) serves as cofactor.

The protein localises to the cytoplasm. It carries out the reaction 7-phospho-2-dehydro-3-deoxy-D-arabino-heptonate = 3-dehydroquinate + phosphate. Its pathway is metabolic intermediate biosynthesis; chorismate biosynthesis; chorismate from D-erythrose 4-phosphate and phosphoenolpyruvate: step 2/7. In terms of biological role, catalyzes the conversion of 3-deoxy-D-arabino-heptulosonate 7-phosphate (DAHP) to dehydroquinate (DHQ). This is 3-dehydroquinate synthase from Campylobacter hominis (strain ATCC BAA-381 / DSM 21671 / CCUG 45161 / LMG 19568 / NCTC 13146 / CH001A).